The chain runs to 520 residues: Cyclic AMP-responsive element-binding protein 3-like protein 2 (520 aa).

The Cytoplasmic portion of the chain corresponds to 1–378 (MEVLESGEQG…CKLAGTQTGT (378 aa)). Serine 93 carries the phosphoserine modification. Lysine 178 participates in a covalent cross-link: Glycyl lysine isopeptide (Lys-Gly) (interchain with G-Cter in SUMO2). Position 191 is a phosphoserine (serine 191). The disordered stretch occupies residues 195-264 (APVDHLHLPP…PHKLQGSGPL (70 aa)). 2 stretches are compositionally biased toward low complexity: residues 208–220 (SSHG…SLSP) and 234–255 (SPSR…LTAP). The bZIP domain maps to 294-357 (ALKKIRRKIK…RTLLQQLQKL (64 aa)). The interval 296–325 (KKIRRKIKNKISAQESRRKKKEYMDSLEKK) is basic motif. The tract at residues 336 to 357 (LRKKVEVLENTNRTLLQQLQKL) is leucine-zipper. A helical; Signal-anchor for type II membrane protein membrane pass occupies residues 379–399 (CLMVVVLCFAVAFGSFFQGYG). The Lumenal segment spans residues 400 to 520 (PYPSATKMAL…ELDRRVNTTF (121 aa)). The S1P recognition motif lies at 427–430 (RNLL). N-linked (GlcNAc...) asparagine glycans are attached at residues asparagine 480, asparagine 504, and asparagine 517.

It belongs to the bZIP family. ATF subfamily. Binds DNA as a dimer. In terms of processing, upon ER stress, translocated to the Golgi apparatus, where it is processed by regulated intramembrane proteolysis (RIP) to release the cytosol-facing N-terminal transcription factor domain. The cleavage is performed sequentially by site-1 and site-2 proteases (S1P/MBTPS1 and S2P/MBTPS2). Post-translationally, N-glycosylated. Ubiquitinated by HRD1/SYVN1; undergoes 'Lys-48'-linked ubiquitination, followed by rapid proteasomal degradation under normal conditions. Upon ER stress, SYVN1 E3 ubiquitin-protein ligase dissociates from its substrate, ubiquitination does not occur and CREB3L2 is stabilized.

The protein resides in the endoplasmic reticulum membrane. It is found in the nucleus. In terms of biological role, transcription factor involved in unfolded protein response (UPR). In the absence of endoplasmic reticulum (ER) stress, inserted into ER membranes, with N-terminal DNA-binding and transcription activation domains oriented toward the cytosolic face of the membrane. In response to ER stress, transported to the Golgi, where it is cleaved in a site-specific manner by resident proteases S1P/MBTPS1 and S2P/MBTPS2. The released N-terminal cytosolic domain is translocated to the nucleus to effect transcription of specific target genes. Plays a critical role in chondrogenesis by activating the transcription of SEC23A, which promotes the transport and secretion of cartilage matrix proteins, and possibly that of ER biogenesis-related genes. In a neuroblastoma cell line, protects cells from ER stress-induced death. In vitro activates transcription of target genes via direct binding to the CRE site. The protein is Cyclic AMP-responsive element-binding protein 3-like protein 2 (CREB3L2) of Pongo abelii (Sumatran orangutan).